A 257-amino-acid polypeptide reads, in one-letter code: Hydroxyacylglutathione hydrolase (257 aa).

Zn(2+) contacts are provided by His54, His56, Asp58, His59, His113, Asp137, and His175.

Belongs to the metallo-beta-lactamase superfamily. Glyoxalase II family. Monomer. It depends on Zn(2+) as a cofactor.

The enzyme catalyses an S-(2-hydroxyacyl)glutathione + H2O = a 2-hydroxy carboxylate + glutathione + H(+). It functions in the pathway secondary metabolite metabolism; methylglyoxal degradation; (R)-lactate from methylglyoxal: step 2/2. Thiolesterase that catalyzes the hydrolysis of S-D-lactoyl-glutathione to form glutathione and D-lactic acid. The chain is Hydroxyacylglutathione hydrolase from Gloeothece citriformis (strain PCC 7424) (Cyanothece sp. (strain PCC 7424)).